The sequence spans 47 residues: Delta-actitoxin-Axm1g (47 aa).

3 cysteine pairs are disulfide-bonded: cysteine 4–cysteine 44, cysteine 6–cysteine 34, and cysteine 27–cysteine 45.

It belongs to the sea anemone sodium channel inhibitory toxin family. Type I subfamily.

It is found in the secreted. Its subcellular location is the nematocyst. The protein is Delta-actitoxin-Axm1g of Anthopleura xanthogrammica (Giant green sea anemone).